The chain runs to 342 residues: RNA 3'-terminal phosphate cyclase (342 aa).

Belongs to the RNA 3'-terminal cyclase family. Type 1 subfamily.

It localises to the cytoplasm. It carries out the reaction a 3'-end 3'-phospho-ribonucleotide-RNA + GTP = a 3'-end 2',3'-cyclophospho-ribonucleotide-RNA + GMP + diphosphate. With respect to regulation, inhibited by GMP. In terms of biological role, catalyzes the GTP-dependent conversion of 3'-phosphate to a 2',3'-cyclic phosphodiester at the end of RNA. The biological role of this enzyme is unknown but it is likely to function in some aspects of cellular RNA processing. The chain is RNA 3'-terminal phosphate cyclase from Pyrococcus furiosus (strain ATCC 43587 / DSM 3638 / JCM 8422 / Vc1).